The following is a 518-amino-acid chain: Gypsy retrotransposon integrase-like protein 1 (518 aa).

Residues 135–293 enclose the Integrase catalytic domain; that stretch reads VVGNPWSVVT…PYFQMFNRNP (159 aa). A disordered region spans residues 326 to 348; it reads NQTPAAGQMESSTSEELSKSKVA. Position 498 is a phosphoserine (serine 498).

The sequence is that of Gypsy retrotransposon integrase-like protein 1 (GIN1) from Rattus norvegicus (Rat).